The chain runs to 82 residues: MNRKLLFVTLMVTMLVMQPSEGGKVWDWIKSTAKKLWNSEPVKELKNTALNAAKNLVAEKIGATPSEAGQMPFDEFMDILYE.

The first 22 residues, 1 to 22 (MNRKLLFVTLMVTMLVMQPSEG), serve as a signal peptide directing secretion. A propeptide spanning residues 67 to 82 (EAGQMPFDEFMDILYE) is cleaved from the precursor.

Expressed by the venom gland.

It is found in the secreted. Its subcellular location is the target cell membrane. Functionally, at high concentrations, acts as a pore former in cellular membranes and causes the leakage of the cells. At submicromolar concentrations, degranulates granulocytes and has a weak hemolytic activity against human erythrocytes. Also strongly inhibits the production of superoxide anions. Has a strong antibacterial activity against Gram-negative bacteria but is less active against Gram-positive bacteria. Also has antifungal activity. The polypeptide is Opistoporin-1 (Opistophthalmus carinatus (African yellow leg scorpion)).